A 1453-amino-acid chain; its full sequence is Collagen alpha-1(I) chain (1453 aa).

Positions 1-22 (MFSFVDLRLLLLLGATALLTHG) are cleaved as a signal peptide. A propeptide spans 23-151 (QEDIPEVSCI…PPGLGGNFAS (129 aa)) (N-terminal propeptide). The 59-residue stretch at 29 to 87 (VSCIHNGLRVPNGETWKPDVCLICICHNGTAVCDGVLCKEDLDCPNPQKREGECCPFCP) folds into the VWFC domain. Asn56 carries an N-linked (GlcNAc...) asparagine glycan. A disordered region spans residues 97–1206 (VIGVEGPKGD…KSQDGGRYYR (1110 aa)). Composition is skewed to pro residues over residues 109 to 118 (PQGPRGPVGP) and 128 to 143 (PGLP…PGPP). Gln152 is subject to Pyrrolidone carboxylic acid. The interval 152-167 (QMSYGYDEKSAGVSVP) is nonhelical region (N-terminal). Lys160 carries the allysine modification. At Ser161 the chain carries Phosphoserine. Residues 168-1181 (GPMGPSGPRG…PGPPGPPGPP (1014 aa)) are triple-helical region. 4-hydroxyproline is present on residues Pro179, Pro182, Pro185, Pro194, Pro197, Pro200, Pro215, Pro230, Pro236, Pro245, and Pro251. Positions 187 to 206 (PQGFQGPPGEPGEPGASGPM) are enriched in low complexity. A compositionally biased stretch (basic and acidic residues) spans 218–232 (NGDDGEAGKPGRPGE). Position 254 is a 5-hydroxylysine; alternate (Lys254). An O-linked (Gal...) hydroxylysine; alternate glycan is attached at Lys254. Ser260 carries the post-translational modification Phosphoserine. 4-hydroxyproline is present on residues Pro278, Pro281, Pro287, Pro296, and Pro302. Positions 307-320 (SAGARGNDGAVGAA) are enriched in low complexity. Positions 322–334 (PPGPTGPTGPPGF) are enriched in pro residues. 4-hydroxyproline is present on residues Pro323, Pro332, Pro335, Pro362, Pro365, Pro377, Pro383, Pro392, Pro398, Pro401, and Pro416. A compositionally biased stretch (low complexity) spans 335–361 (PGAAGAKGEAGPQGARGSEGPQGVRGE). A compositionally biased stretch (low complexity) spans 368–418 (AGAAGPAGNPGADGQPGAKGANGAPGIAGAPGFPGARGPSGPQGPSGAPGP). Lys419 is modified (5-hydroxylysine). 4-hydroxyproline occurs at positions 425, 428, 440, 449, 464, 470, 479, and 485. The segment covering 474 to 483 (GERGGPGSRG) has biased composition (gly residues). Lys494 is modified (5-hydroxylysine). 4-hydroxyproline is present on residues Pro503, Pro512, Pro518, Pro524, Pro533, Pro536, Pro545, Pro554, Pro560, Pro572, Pro581, Pro590, Pro593, Pro611, Pro629, Pro635, Pro641, Pro647, Pro653, Pro659, Pro671, Pro680, Pro692, Pro704, Pro707, Pro713, Pro719, and Pro728. Low complexity predominate over residues 527-566 (KGLTGSPGSPGPDGKTGPPGPAGQDGRPGPAGPPGARGQA). Low complexity predominate over residues 623-650 (QGPAGSPGFQGLPGPAGPPGEAGKPGEQ). Composition is skewed to low complexity over residues 685–695 (PRGNNGAPGND) and 703–716 (APGA…PGLQ). A Cell attachment site motif is present at residues 734-736 (RGD). Lys740 carries the 5-hydroxylysine modification. Residues Pro746, Pro761, and Pro767 each carry the 4-hydroxyproline modification. The span at 773–787 (TGPSGPAGPTGARGA) shows a compositional bias: low complexity. Ser776 is subject to Phosphoserine. Residues Pro788, Pro794, Pro797, Pro806, Pro812, Pro830, Pro839, and Pro848 each carry the 4-hydroxyproline modification. Positions 800-815 (AGFAGPPGADGQPGAK) are enriched in low complexity. Positions 829–841 (PPGPAGPAGPPGP) are enriched in pro residues. The span at 842-872 (IGNVGAPGPKGSRGAAGPPGATGFPGAAGRV) shows a compositional bias: low complexity. Residue Lys851 is modified to 5-hydroxylysine. Pro860 and Pro866 each carry 4-hydroxyproline. Pro874 carries the 3-hydroxyproline modification. A 4-hydroxyproline mark is found at Pro875, Pro884, Pro887, Pro908, Pro917, Pro926, Pro935, Pro953, Pro962, Pro965, Pro971, Pro986, Pro992, Pro998, Pro1007, and Pro1013. The segment covering 901-910 (ETGPAGRPGE) has biased composition (low complexity). Residues 920-935 (AGEKGSPGADGPAGSP) are compositionally biased toward low complexity. Residues 985–995 (PPGPMGPPGLA) show a composition bias toward pro residues. Residues 997 to 1012 (PPGESGREGSPGAEGS) show a composition bias toward low complexity. Lys1022 carries the 5-hydroxylysine modification. Residues 1031–1046 (AGPPGAPGAPGAPGPV) show a composition bias toward pro residues. 4-hydroxyproline occurs at positions 1034, 1037, and 1040. Positions 1067–1081 (IGPAGARGPAGPQGP) are enriched in low complexity. The Cell attachment site motif lies at 1082 to 1084 (RGD). Positions 1082–1096 (RGDKGETGEQGDRGI) are enriched in basic and acidic residues. Position 1085 is a 5-hydroxylysine (Lys1085). Lys1097 is subject to 5-hydroxylysine; alternate. An O-linked (Gal...) hydroxylysine; alternate glycan is attached at Lys1097. Residues 1102 to 1148 (FSGLQGPPGSPGSPGEQGPSGASGPAGPRGPPGSAGSPGKDGLNGLP) are compositionally biased toward low complexity. 4-hydroxyproline occurs at positions 1109, 1112, 1115, 1133, and 1148. Pro1153 carries the post-translational modification 3-hydroxyproline. The residue at position 1154 (Pro1154) is a 4-hydroxyproline. Over residues 1166–1181 (AGPPGPPGPPGPPGPP) the composition is skewed to pro residues. At Pro1168 the chain carries 3-hydroxyproline. A 4-hydroxyproline modification is found at Pro1169. 3-hydroxyproline is present on Pro1171. A 4-hydroxyproline modification is found at Pro1172. At Pro1174 the chain carries 3-hydroxyproline. Pro1175, Pro1178, and Pro1181 each carry 4-hydroxyproline. A major antigenic determinant (of neutral salt-extracted rat skin collagen) region spans residues 1176–1186 (GPPGPPSGGYD). The tract at residues 1182 to 1207 (SGGYDFSFLPQPPQEKSQDGGRYYRA) is nonhelical region (C-terminal). Allysine is present on Lys1197. The segment covering 1197 to 1206 (KSQDGGRYYR) has biased composition (basic and acidic residues). A propeptide spans 1208 to 1453 (DDANVVRDRD…GMDIGPACFV (246 aa)) (C-terminal propeptide). Residues 1218 to 1453 (LEVDTTLKSL…GMDIGPACFV (236 aa)) form the Fibrillar collagen NC1 domain. Cystine bridges form between Cys1248/Cys1280, Cys1288/Cys1451, and Cys1359/Cys1404. Ca(2+)-binding residues include Asp1266, Asn1268, Gln1269, Cys1271, and Asp1274. The N-linked (GlcNAc...) asparagine glycan is linked to Asn1354.

Belongs to the fibrillar collagen family. As to quaternary structure, trimers of one alpha 2(I) and two alpha 1(I) chains. Interacts with MRC2. Interacts with TRAM2. Interacts with MFAP4 in a Ca (2+)-dependent manner. Post-translationally, contains mostly 4-hydroxyproline. Proline residues at the third position of the tripeptide repeating unit (G-X-Y) are hydroxylated in some or all of the chains. In terms of processing, contains 3-hydroxyproline at a few sites. This modification occurs on the first proline residue in the sequence motif Gly-Pro-Hyp, where Hyp is 4-hydroxyproline. Lysine residues at the third position of the tripeptide repeating unit (G-X-Y) are 5-hydroxylated in some or all of the chains. Post-translationally, O-glycosylated on hydroxylated lysine residues. The O-linked glycan consists of a Glc-Gal disaccharide. Forms the fibrils of tendon, ligaments and bones. In bones the fibrils are mineralized with calcium hydroxyapatite.

Its subcellular location is the secreted. It is found in the extracellular space. The protein localises to the extracellular matrix. Type I collagen is a member of group I collagen (fibrillar forming collagen). In Rattus norvegicus (Rat), this protein is Collagen alpha-1(I) chain (Col1a1).